A 315-amino-acid chain; its full sequence is Glycine--tRNA ligase alpha subunit (315 aa).

This sequence belongs to the class-II aminoacyl-tRNA synthetase family. Tetramer of two alpha and two beta subunits.

It localises to the cytoplasm. The catalysed reaction is tRNA(Gly) + glycine + ATP = glycyl-tRNA(Gly) + AMP + diphosphate. The protein is Glycine--tRNA ligase alpha subunit of Pseudomonas paraeruginosa (strain DSM 24068 / PA7) (Pseudomonas aeruginosa (strain PA7)).